The sequence spans 108 residues: Large ribosomal subunit protein uL24 (108 aa).

Belongs to the universal ribosomal protein uL24 family. As to quaternary structure, part of the 50S ribosomal subunit.

Functionally, one of two assembly initiator proteins, it binds directly to the 5'-end of the 23S rRNA, where it nucleates assembly of the 50S subunit. One of the proteins that surrounds the polypeptide exit tunnel on the outside of the subunit. The sequence is that of Large ribosomal subunit protein uL24 from Frankia casuarinae (strain DSM 45818 / CECT 9043 / HFP020203 / CcI3).